A 333-amino-acid polypeptide reads, in one-letter code: Eukaryotic translation initiation factor 2 subunit 2 (333 aa).

Disordered stretches follow at residues 1–119 (MSGD…DLDI) and 139–164 (ILEK…NQTG). An N-acetylserine modification is found at Ser-2. A phosphoserine mark is found at Ser-2 and Ser-13. The segment covering 13-22 (SKKKKKKKKP) has biased composition (basic residues). Thr-31 and Thr-36 each carry phosphothreonine. The segment covering 40 to 51 (ETKEVEPEPTED) has biased composition (basic and acidic residues). Position 67 is a phosphoserine (Ser-67). The span at 96 to 105 (EGVKDLKIES) shows a compositional bias: basic and acidic residues. Residue Lys-102 forms a Glycyl lysine isopeptide (Lys-Gly) (interchain with G-Cter in SUMO2) linkage. Phosphoserine is present on Ser-105. 2 stretches are compositionally biased toward acidic residues: residues 106–118 (DVQE…DDLD) and 139–149 (ILEKDEALEDE). A Phosphothreonine modification is found at Thr-111. A phosphoserine mark is found at Ser-158 and Ser-218. 2 positions are modified to N6-acetyllysine: Lys-265 and Lys-293. The C4-type zinc finger occupies 281 to 305 (CHTCRSPDTILQKDTRLYFLQCETC).

This sequence belongs to the eIF-2-beta/eIF-5 family. Eukaryotic translation initiation factor 2 eIF2 is a heterotrimeric complex composed of an alpha (EIF2S1), a beta (EIF2S2) and a gamma (EIF2S3) chain. eIF2 is member of the 43S pre-initiation complex (43S PIC). eIF2 forms a complex with at least CELF1/CUGBP1, CALR, CALR3, EIF2S1, EIF2S2, HSP90B1 and HSPA5. Interacts with BZW2/5MP1. Interacts with EIF5.

It localises to the cytoplasm. The protein localises to the cytosol. Its function is as follows. Component of the eIF2 complex that functions in the early steps of protein synthesis by forming a ternary complex with GTP and initiator tRNA. This complex binds to a 40S ribosomal subunit, followed by mRNA binding to form the 43S pre-initiation complex (43S PIC). Junction of the 60S ribosomal subunit to form the 80S initiation complex is preceded by hydrolysis of the GTP bound to eIF2 and release of an eIF2-GDP binary complex. In order for eIF2 to recycle and catalyze another round of initiation, the GDP bound to eIF2 must exchange with GTP by way of a reaction catalyzed by eIF2B. The protein is Eukaryotic translation initiation factor 2 subunit 2 (EIF2S2) of Pongo abelii (Sumatran orangutan).